A 152-amino-acid chain; its full sequence is MNPQSMKEQIRLDIELAVQRRVAVSVGDRFGTQSALFRRQFDEANAVSHRVQQTERLRAIKNKVVYLTTEIENRTKEVESLIRFDPKKVDILEELTDKVEELEANVSFEVDRIQGYQERYHGGQQTSLPDCNGELETTLTQWRLEQAPRCPP.

The stretch at 86–120 forms a coiled coil; the sequence is PKKVDILEELTDKVEELEANVSFEVDRIQGYQERY.

This sequence belongs to the herpesviridae UL96 family.

This chain is Gene 35 protein (35), found in Connochaetes taurinus (Blue wildebeest).